The sequence spans 260 residues: Methylthioribulose-1-phosphate dehydratase (260 aa).

Residues 1 to 26 are disordered; that stretch reads MTPPTTGLPAENTTDDNDHLVQSDDP. Residues 16–26 are compositionally biased toward basic and acidic residues; the sequence is DNDHLVQSDDP. Position 109 (cysteine 109) interacts with substrate. Zn(2+) is bound by residues histidine 127 and histidine 129. Glutamate 154 serves as the catalytic Proton donor/acceptor. Histidine 211 contacts Zn(2+).

The protein belongs to the aldolase class II family. MtnB subfamily. Requires Zn(2+) as cofactor.

Its subcellular location is the cytoplasm. It carries out the reaction 5-(methylsulfanyl)-D-ribulose 1-phosphate = 5-methylsulfanyl-2,3-dioxopentyl phosphate + H2O. Its pathway is amino-acid biosynthesis; L-methionine biosynthesis via salvage pathway; L-methionine from S-methyl-5-thio-alpha-D-ribose 1-phosphate: step 2/6. Its function is as follows. Catalyzes the dehydration of methylthioribulose-1-phosphate (MTRu-1-P) into 2,3-diketo-5-methylthiopentyl-1-phosphate (DK-MTP-1-P). This chain is Methylthioribulose-1-phosphate dehydratase, found in Podospora anserina (strain S / ATCC MYA-4624 / DSM 980 / FGSC 10383) (Pleurage anserina).